A 252-amino-acid chain; its full sequence is Flagellar brake protein YcgR (252 aa).

The region spanning 123–238 (QRREFYRVPT…TLATVQKYIT (116 aa)) is the PilZ domain.

Belongs to the YcgR family. In terms of assembly, monomer. Interacts with the flagellar basal bodies.

It is found in the bacterial flagellum basal body. Its function is as follows. Acts as a flagellar brake, regulating swimming and swarming in a bis-(3'-5') cyclic diguanylic acid (c-di-GMP)-dependent manner. Binds 1 c-di-GMP dimer per subunit. Increasing levels of c-di-GMP lead to decreased motility. The polypeptide is Flagellar brake protein YcgR (Janthinobacterium sp. (strain Marseille) (Minibacterium massiliensis)).